The sequence spans 189 residues: MLDDITTQLKSRRALFELIARDMPPLMADMAAQLVEAFRKGNKLLVMGNGGSAADAQHLAAEIVGRFKMERRALPAISLSTDSSILTALGNDYGFDAVFRRQVEALAQAGDVVLGISTSGNSPNVRSALQLARERGCRTMGLLGRDGGSIRSLCDLALVVPSLDTPTIQEGHITIIHIVCDLVEKALFA.

An SIS domain is found at 34–189; it reads LVEAFRKGNK…CDLVEKALFA (156 aa). Position 49-51 (49-51) interacts with substrate; that stretch reads NGG. The Zn(2+) site is built by His58 and Glu62. Substrate-binding positions include Glu62, 91–92, 117–119, Ser122, and Gln169; these read ND and STS. Zn(2+) is bound by residues Gln169 and His177.

The protein belongs to the SIS family. GmhA subfamily. Homotetramer. Zn(2+) serves as cofactor.

It is found in the cytoplasm. The enzyme catalyses 2 D-sedoheptulose 7-phosphate = D-glycero-alpha-D-manno-heptose 7-phosphate + D-glycero-beta-D-manno-heptose 7-phosphate. Its pathway is carbohydrate biosynthesis; D-glycero-D-manno-heptose 7-phosphate biosynthesis; D-glycero-alpha-D-manno-heptose 7-phosphate and D-glycero-beta-D-manno-heptose 7-phosphate from sedoheptulose 7-phosphate: step 1/1. In terms of biological role, catalyzes the isomerization of sedoheptulose 7-phosphate in D-glycero-D-manno-heptose 7-phosphate. The sequence is that of Phosphoheptose isomerase from Pelobacter propionicus (strain DSM 2379 / NBRC 103807 / OttBd1).